The sequence spans 181 residues: Isopentenyl-diphosphate Delta-isomerase (181 aa).

Mn(2+) contacts are provided by histidine 29 and histidine 36. In terms of domain architecture, Nudix hydrolase spans 34–167 (PLHLAFSCYL…GWAISPWAAE (134 aa)). Residue cysteine 71 is part of the active site. Residue histidine 73 participates in Mn(2+) binding. Residue glutamate 91 coordinates Mg(2+). Positions 118 and 120 each coordinate Mn(2+). Glutamate 120 is a catalytic residue.

It belongs to the IPP isomerase type 1 family. Mg(2+) serves as cofactor. Requires Mn(2+) as cofactor.

It is found in the cytoplasm. It carries out the reaction isopentenyl diphosphate = dimethylallyl diphosphate. It functions in the pathway isoprenoid biosynthesis; dimethylallyl diphosphate biosynthesis; dimethylallyl diphosphate from isopentenyl diphosphate: step 1/1. Functionally, catalyzes the 1,3-allylic rearrangement of the homoallylic substrate isopentenyl (IPP) to its highly electrophilic allylic isomer, dimethylallyl diphosphate (DMAPP). The protein is Isopentenyl-diphosphate Delta-isomerase of Mycolicibacterium vanbaalenii (strain DSM 7251 / JCM 13017 / BCRC 16820 / KCTC 9966 / NRRL B-24157 / PYR-1) (Mycobacterium vanbaalenii).